Reading from the N-terminus, the 1341-residue chain is DNA-directed RNA polymerase subunit beta (1341 aa).

Belongs to the RNA polymerase beta chain family. As to quaternary structure, the RNAP catalytic core consists of 2 alpha, 1 beta, 1 beta' and 1 omega subunit. When a sigma factor is associated with the core the holoenzyme is formed, which can initiate transcription.

It carries out the reaction RNA(n) + a ribonucleoside 5'-triphosphate = RNA(n+1) + diphosphate. In terms of biological role, DNA-dependent RNA polymerase catalyzes the transcription of DNA into RNA using the four ribonucleoside triphosphates as substrates. The chain is DNA-directed RNA polymerase subunit beta from Photobacterium profundum (strain SS9).